The primary structure comprises 31 residues: Cytochrome b6-f complex subunit 6 (31 aa).

The helical transmembrane segment at 3–23 (IITSYFGFLLTALTIASALFI) threads the bilayer.

It belongs to the PetL family. In terms of assembly, the 4 large subunits of the cytochrome b6-f complex are cytochrome b6, subunit IV (17 kDa polypeptide, PetD), cytochrome f and the Rieske protein, while the 4 small subunits are PetG, PetL, PetM and PetN. The complex functions as a dimer.

The protein resides in the plastid. It localises to the chloroplast thylakoid membrane. Its function is as follows. Component of the cytochrome b6-f complex, which mediates electron transfer between photosystem II (PSII) and photosystem I (PSI), cyclic electron flow around PSI, and state transitions. PetL is important for photoautotrophic growth as well as for electron transfer efficiency and stability of the cytochrome b6-f complex. This Helianthus annuus (Common sunflower) protein is Cytochrome b6-f complex subunit 6.